A 355-amino-acid chain; its full sequence is tRNA pseudouridine synthase D (355 aa).

Asp-84 acts as the Nucleophile in catalysis. Positions 160 to 306 (GVPNYFGLQR…MAHERRILRL (147 aa)) constitute a TRUD domain.

It belongs to the pseudouridine synthase TruD family.

The catalysed reaction is uridine(13) in tRNA = pseudouridine(13) in tRNA. Responsible for synthesis of pseudouridine from uracil-13 in transfer RNAs. The protein is tRNA pseudouridine synthase D of Pseudomonas aeruginosa (strain LESB58).